An 882-amino-acid polypeptide reads, in one-letter code: Translation initiation factor IF-2 (882 aa).

A disordered region spans residues 38 to 294; it reads IEDSQASWVK…KSKHKRKKEN (257 aa). 3 stretches are compositionally biased toward basic and acidic residues: residues 66 to 76, 109 to 128, and 207 to 219; these read TRDEAVKKHSG, GRREFSENREQSRKGEERHS, and PDNKGSRPSDAKR. Residues 282-292 are compositionally biased toward basic residues; that stretch reads PGRKSKHKRKK. The tr-type G domain maps to 383–556; that stretch reads ARPPVVTIMG…EMNEIRANPD (174 aa). The segment at 392–399 is G1; it reads GHVDHGKT. A GTP-binding site is contributed by 392 to 399; the sequence is GHVDHGKT. The tract at residues 417–421 is G2; sequence GITQH. The interval 438–441 is G3; it reads DTPG. GTP is bound by residues 438 to 442 and 492 to 495; these read DTPGH and NKID. A G4 region spans residues 492 to 495; sequence NKID. The segment at 528 to 530 is G5; that stretch reads SAK.

This sequence belongs to the TRAFAC class translation factor GTPase superfamily. Classic translation factor GTPase family. IF-2 subfamily.

Its subcellular location is the cytoplasm. Functionally, one of the essential components for the initiation of protein synthesis. Protects formylmethionyl-tRNA from spontaneous hydrolysis and promotes its binding to the 30S ribosomal subunits. Also involved in the hydrolysis of GTP during the formation of the 70S ribosomal complex. The protein is Translation initiation factor IF-2 of Syntrophomonas wolfei subsp. wolfei (strain DSM 2245B / Goettingen).